Reading from the N-terminus, the 912-residue chain is Protein translocase subunit SecA (912 aa).

ATP is bound by residues Gln-86, 104–108, and Asp-494; that span reads GEGKT. The disordered stretch occupies residues 860-912; sequence EAPEKPAQLQYTAPGEDGASQTRVEGRSSGRSGNPAKAAQDGARKPAPKKKKR.

The protein belongs to the SecA family. In terms of assembly, monomer and homodimer. Part of the essential Sec protein translocation apparatus which comprises SecA, SecYEG and auxiliary proteins SecDF. Other proteins may also be involved.

The protein resides in the cell membrane. Its subcellular location is the cytoplasm. It carries out the reaction ATP + H2O + cellular proteinSide 1 = ADP + phosphate + cellular proteinSide 2.. Its function is as follows. Part of the Sec protein translocase complex. Interacts with the SecYEG preprotein conducting channel. Has a central role in coupling the hydrolysis of ATP to the transfer of proteins into and across the cell membrane, serving as an ATP-driven molecular motor driving the stepwise translocation of polypeptide chains across the membrane. This Arthrobacter sp. (strain FB24) protein is Protein translocase subunit SecA.